The sequence spans 285 residues: Phosphatase YwpJ (285 aa).

Catalysis depends on D7, which acts as the Nucleophile. D7 is a Mg(2+) binding site. L8 contributes to the phosphate binding site. Mg(2+) is bound at residue D9. Residues 41-42 (TG) and K214 each bind phosphate. Mg(2+)-binding residues include D237 and S238. Residues N240 and 282–283 (KH) each bind phosphate.

The protein belongs to the HAD-like hydrolase superfamily. Cof family. The cofactor is Mg(2+).

Catalyzes the dephosphorylation of phosphorylated 5-6 carbon sugars and monophosphate nucleotides (NMP) in vitro. To a lesser extent, dephosphorylates flavin mononucleotide (FMN) in vitro. This chain is Phosphatase YwpJ (ywpJ), found in Bacillus subtilis (strain 168).